The sequence spans 364 residues: Cell cycle control protein 50A (364 aa).

Positions 1 to 28 are disordered; that stretch reads MAMNYSAKDEVDGGPAGPPGGAAKTRRP. At alanine 2 the chain carries N-acetylalanine. Residues 2–49 lie on the Cytoplasmic side of the membrane; that stretch reads AMNYSAKDEVDGGPAGPPGGAAKTRRPDNTAFKQQRLPAWQPILTAGT. Residues 50–70 form a helical membrane-spanning segment; that stretch reads VLPTFFIIGLIFIPIGIGIFV. Residues 71–328 lie on the Exoplasmic loop side of the membrane; that stretch reads TSNNIREIEI…SWMGGKNPFL (258 aa). 3 disulfides stabilise this stretch: cysteine 91–cysteine 104, cysteine 94–cysteine 102, and cysteine 157–cysteine 171. N-linked (GlcNAc...) asparagine glycosylation occurs at asparagine 98. A glycan (N-linked (GlcNAc...) asparagine) is linked at asparagine 297. The chain crosses the membrane as a helical span at residues 329-349; the sequence is GIAYITIGSISFLLGVVLLVI. Topologically, residues 350-364 are cytoplasmic; the sequence is NHKYRNSSNTADITI.

Belongs to the CDC50/LEM3 family. As to quaternary structure, component of various P4-ATPase flippase complexes which consists of a catalytic alpha subunit and an accessory beta subunit. Interacts with ATP8A1 to form a flippase complex; this complex forms an intermediate phosphoenzyme. The ATP8A2:TMEM30A flippase complex has been purified, and ATP8B1:TMEM30A and ATP8B2:TMEM30A flippase complexes have been shown to form intermediate phosphoenzymes in vitro. Interacts with alpha subunits ATP8A1, ATP8B1, ATP8B2, ATP8B4, ATP10A, ATP10B, ATP10D, ATP11A, ATP11B and ATP11C. In terms of processing, N-glycosylated. Contains high mannose-type oligosaccharides. As to expression, expressed in photoreceptor cells; detected in retina outer segment (at protein level). Detected in hepatocytes liver sinusoidal endothelial cells and kidney brush border of the proximal tubules (at protein level). Expressed in brain (at protein level).

The protein resides in the membrane. It localises to the cell membrane. It is found in the golgi apparatus. The protein localises to the cytoplasmic vesicle. Its subcellular location is the secretory vesicle membrane. The protein resides in the apical cell membrane. Accessory component of a P4-ATPase flippase complex which catalyzes the hydrolysis of ATP coupled to the transport of aminophospholipids from the outer to the inner leaflet of various membranes and ensures the maintenance of asymmetric distribution of phospholipids. Phospholipid translocation also seems to be implicated in vesicle formation and in uptake of lipid signaling molecules. The beta subunit may assist in binding of the phospholipid substrate. Required for the proper folding, assembly and ER to Golgi exit of the ATP8A2:TMEM30A flippase complex. ATP8A2:TMEM30A may be involved in regulation of neurite outgrowth, and, reconstituted to liposomes, predomiminantly transports phosphatidylserine (PS) and to a lesser extent phosphatidylethanolamine (PE). The ATP8A1:TMEM30A flippase complex seems to play a role in regulation of cell migration probably involving flippase-mediated translocation of phosphatidylethanolamine (PE) at the plasma membrane. Required for the formation of the ATP8A2, ATP8B1 and ATP8B2 P-type ATPAse intermediate phosphoenzymes. Involved in uptake of platelet-activating factor (PAF). Can also mediate the export of alpha subunits ATP8A1, ATP8B1, ATP8B2, ATP8B4, ATP10A, ATP10B, ATP10D, ATP11A, ATP11B and ATP11C from the ER to other membrane localizations. In Mus musculus (Mouse), this protein is Cell cycle control protein 50A.